The primary structure comprises 133 residues: Transcription antitermination protein NusB (133 aa).

It belongs to the NusB family.

In terms of biological role, involved in transcription antitermination. Required for transcription of ribosomal RNA (rRNA) genes. Binds specifically to the boxA antiterminator sequence of the ribosomal RNA (rrn) operons. In Pediococcus pentosaceus (strain ATCC 25745 / CCUG 21536 / LMG 10740 / 183-1w), this protein is Transcription antitermination protein NusB.